The sequence spans 611 residues: Nuclear cap-binding protein subunit 3 (611 aa).

A disordered region spans residues 1-44 (MAAVRGLRVSVKAGGGAEPEPMEVEEGEVEAAADRASPREVVSG). Residues 20-31 (EPMEVEEGEVEA) are compositionally biased toward acidic residues. The interval 108-169 (ETLYVYGVDD…LSSMPTNEKG (62 aa)) is RNA recognition motif (RRM) domain. The WLDD motif; essential for 7-methylguanosine-containing mRNA cap binding motif lies at 137 to 140 (WLDD). 5 disordered regions span residues 159–230 (NLSS…PDTL), 338–360 (EEPI…DDRV), 373–393 (RERE…EMDY), 423–568 (KTIR…DSVL), and 583–611 (RQKK…DTDS). A compositionally biased stretch (basic and acidic residues) spans 168 to 179 (KGQRKKDGEHSS). 2 stretches are compositionally biased toward acidic residues: residues 196–218 (DETE…DETE) and 339–358 (EPIE…DEDD). Polar residues predominate over residues 423–439 (KTIRNSMRSDSVGNSVK). Residues 446 to 463 (SHAEKPADVRLILEEKRQ) are compositionally biased toward basic and acidic residues. Low complexity predominate over residues 464-475 (STASRQQSSSGK). Basic and acidic residues-rich tracts occupy residues 501-511 (SRREPLSDVHS) and 544-556 (PKDK…KSEK). Over residues 602-611 (ESSSGSDTDS) the composition is skewed to low complexity.

This sequence belongs to the NCBP3 family. In terms of assembly, component of an alternative cap-binding complex (CBC) composed of NCBP1/CBP80 and NCBP3.

Its subcellular location is the nucleus. It localises to the cytoplasm. In terms of biological role, associates with NCBP1/CBP80 to form an alternative cap-binding complex (CBC) which plays a key role in mRNA export. NCBP3 serves as adapter protein linking the capped RNAs (m7GpppG-capped RNA) to NCBP1/CBP80. Unlike the conventional CBC with NCBP2 which binds both small nuclear RNA (snRNA) and messenger (mRNA) and is involved in their export from the nucleus, the alternative CBC with NCBP3 does not bind snRNA and associates only with mRNA thereby playing a role in only mRNA export. This chain is Nuclear cap-binding protein subunit 3, found in Xenopus tropicalis (Western clawed frog).